The primary structure comprises 1299 residues: Phosphoribosylformylglycinamidine synthase (1299 aa).

ATP contacts are provided by residues 310 to 321 (GAATGAGGEIRD), 389 to 391 (TGY), and alanine 680. Mg(2+)-binding residues include aspartate 681, glutamate 720, asparagine 724, and aspartate 888. Serine 890 contributes to the ATP binding site. A Glutamine amidotransferase type-1 domain is found at 1046–1299 (VAVLREQGVN…MFRNARVWLG (254 aa)). Cysteine 1139 (nucleophile) is an active-site residue. Catalysis depends on residues histidine 1264 and glutamate 1266.

The protein in the N-terminal section; belongs to the FGAMS family. As to quaternary structure, monomer.

Its subcellular location is the cytoplasm. The enzyme catalyses N(2)-formyl-N(1)-(5-phospho-beta-D-ribosyl)glycinamide + L-glutamine + ATP + H2O = 2-formamido-N(1)-(5-O-phospho-beta-D-ribosyl)acetamidine + L-glutamate + ADP + phosphate + H(+). The protein operates within purine metabolism; IMP biosynthesis via de novo pathway; 5-amino-1-(5-phospho-D-ribosyl)imidazole from N(2)-formyl-N(1)-(5-phospho-D-ribosyl)glycinamide: step 1/2. Phosphoribosylformylglycinamidine synthase involved in the purines biosynthetic pathway. Catalyzes the ATP-dependent conversion of formylglycinamide ribonucleotide (FGAR) and glutamine to yield formylglycinamidine ribonucleotide (FGAM) and glutamate. The chain is Phosphoribosylformylglycinamidine synthase from Myxococcus xanthus (strain DK1622).